Reading from the N-terminus, the 261-residue chain is 4-hydroxy-tetrahydrodipicolinate reductase (261 aa).

NAD(+) is bound at residue 9–14; the sequence is GCLGRM. An NADP(+)-binding site is contributed by R36. Residues 97–99 and 118–121 contribute to the NAD(+) site; these read GTT and SANM. The Proton donor/acceptor role is filled by H151. H152 serves as a coordination point for (S)-2,3,4,5-tetrahydrodipicolinate. K155 serves as the catalytic Proton donor. Residue 161–162 participates in (S)-2,3,4,5-tetrahydrodipicolinate binding; that stretch reads GT.

The protein belongs to the DapB family.

Its subcellular location is the cytoplasm. It carries out the reaction (S)-2,3,4,5-tetrahydrodipicolinate + NAD(+) + H2O = (2S,4S)-4-hydroxy-2,3,4,5-tetrahydrodipicolinate + NADH + H(+). It catalyses the reaction (S)-2,3,4,5-tetrahydrodipicolinate + NADP(+) + H2O = (2S,4S)-4-hydroxy-2,3,4,5-tetrahydrodipicolinate + NADPH + H(+). The protein operates within amino-acid biosynthesis; L-lysine biosynthesis via DAP pathway; (S)-tetrahydrodipicolinate from L-aspartate: step 4/4. Functionally, catalyzes the conversion of 4-hydroxy-tetrahydrodipicolinate (HTPA) to tetrahydrodipicolinate. This Wolbachia sp. subsp. Drosophila simulans (strain wRi) protein is 4-hydroxy-tetrahydrodipicolinate reductase.